A 335-amino-acid polypeptide reads, in one-letter code: F420-dependent glucose-6-phosphate dehydrogenase (335 aa).

Position 40 (Asp-40) interacts with coenzyme F420-(gamma-Glu)n. Residue His-41 is the Proton donor of the active site. Residues Thr-77 and 108 to 109 (TG) contribute to the coenzyme F420-(gamma-Glu)n site. Catalysis depends on Glu-110, which acts as the Proton acceptor. Coenzyme F420-(gamma-Glu)n contacts are provided by residues Asn-113, 177 to 178 (GG), and 180 to 181 (VV). Substrate-binding residues include Thr-195, Lys-198, Lys-259, and Arg-283.

It belongs to the F420-dependent glucose-6-phosphate dehydrogenase family. In terms of assembly, homodimer.

It catalyses the reaction oxidized coenzyme F420-(gamma-L-Glu)(n) + D-glucose 6-phosphate + H(+) = 6-phospho-D-glucono-1,5-lactone + reduced coenzyme F420-(gamma-L-Glu)(n). Its function is as follows. Catalyzes the coenzyme F420-dependent oxidation of glucose 6-phosphate (G6P) to 6-phosphogluconolactone. This Segniliparus rotundus (strain ATCC BAA-972 / CDC 1076 / CIP 108378 / DSM 44985 / JCM 13578) protein is F420-dependent glucose-6-phosphate dehydrogenase.